The following is a 289-amino-acid chain: Myoblast determination protein 1 homolog A (289 aa).

One can recognise a bHLH domain in the interval 95-146; the sequence is DRRKAATMRERRRLSKVNEAFETLKRYTSTNPNQRLPKVEILRNAIRYIESL. Residues 165 to 212 form a disordered region; the sequence is SGDSDASSPRSNCSDGMMDYNSPPCGSRRRNSYDSSFYSDSPNDSRLG. 2 stretches are compositionally biased toward polar residues: residues 168 to 178 and 197 to 208; these read SDASSPRSNCS and YDSSFYSDSPND.

In terms of assembly, efficient DNA binding requires dimerization with another bHLH protein.

It localises to the nucleus. In terms of biological role, may act as a transcriptional activator that promotes transcription of muscle-specific target genes and plays a role in muscle differentiation. This is Myoblast determination protein 1 homolog A (myod1-a) from Xenopus laevis (African clawed frog).